Reading from the N-terminus, the 608-residue chain is MSAPNNNNNNTTTTTTTSPSPSQSSPTLTSVASNSTTTTTTETLTTPKLQFVVRSKTNAYQEIGQQYGKNLNLPSYSNGDCRHVEYSKDGTLIAYVNLNEIVICNSDGGSVHSVINRPNVGMISFSPQNSFLLTWERMSEYNNNENNLIVWDIKQASILYKTSQKYCNQENWPLIKWTDDEVLAGKLISNEVHFFNGRSIGVLAKKIKLQDISSFEFAPATNGGPYKIATFVPEKGSTPGSARIYSYPTVNEYCSHLKFFKASEAKVLWNKKGNAILVHTFTDTDKSGKSYYGETGLWFLSQDGSSFNLNIKGPIHDVQWSPTLDQFMVCYGNMPSQTTLFNLKGEPLVDFGLNPRNTIRFSPNGQLLCLGGFGNLQGDMDFWDLTRYKRICGTQSHCAIYTEWSADSVHFMTAVLSPRIRVDNGVKIIKYDNTIVYQENIPELYQASWRPLNPLVFPNERIVYPSIQQQKESSPQPQKYTPPSLRNMQAAPPVVTSPPAMGAPLPSGFKVYLASAKSSSTFKPKQKPSSTTTTNNTTTTTTKPAADEPKRELTPIEKKIRNVERKLKEVEVLKEKLNSGEFIPPTAIEKINNEQKFLEELRKLQSEL.

The segment at 1 to 42 is disordered; the sequence is MSAPNNNNNNTTTTTTTSPSPSQSSPTLTSVASNSTTTTTTE. 4 WD repeats span residues 115 to 161, 207 to 255, 310 to 350, and 351 to 393; these read INRP…ILYK, IKLQ…EYCS, NIKG…PLVD, and FGLN…RICG. Composition is skewed to low complexity over residues 466 to 478 and 520 to 544; these read SIQQ…PQPQ and STFK…TTKP. 2 disordered regions span residues 466-499 and 520-554; these read SIQQ…TSPP and STFK…RELT. Residues 545-554 are compositionally biased toward basic and acidic residues; that stretch reads AADEPKRELT. The stretch at 550-608 forms a coiled coil; that stretch reads KRELTPIEKKIRNVERKLKEVEVLKEKLNSGEFIPPTAIEKINNEQKFLEELRKLQSEL.

It belongs to the WD repeat EIF2A family.

Its function is as follows. Functions in the early steps of protein synthesis of a small number of specific mRNAs. Acts by directing the binding of methionyl-tRNAi to 40S ribosomal subunits. In contrast to the eIF-2 complex, it binds methionyl-tRNAi to 40S subunits in a codon-dependent manner, whereas the eIF-2 complex binds methionyl-tRNAi to 40S subunits in a GTP-dependent manner. In Dictyostelium discoideum (Social amoeba), this protein is Eukaryotic translation initiation factor 2A (eif2a).